A 617-amino-acid polypeptide reads, in one-letter code: Procollagen galactosyltransferase 1 (617 aa).

The signal sequence occupies residues 1-31 (MAALPRGSRGLPLLPLLLLLPPLGGPRGADG). 3 N-linked (GlcNAc...) asparagine glycosylation sites follow: Asn91, Asn179, and Asn376. Positions 582 to 601 (DRAKSQKMREQQALSREAKN) are enriched in basic and acidic residues. A disordered region spans residues 582–617 (DRAKSQKMREQQALSREAKNSDVLQSPLDSTARDEL). The Prevents secretion from ER signature appears at 614-617 (RDEL).

This sequence belongs to the glycosyltransferase 25 family. N-glycosylated.

It is found in the endoplasmic reticulum lumen. The catalysed reaction is (5R)-5-hydroxy-L-lysyl-[collagen] + UDP-alpha-D-galactose = (5R)-5-O-(beta-D-galactosyl)-5-hydroxy-L-lysyl-[collagen] + UDP + H(+). Beta-galactosyltransferase that transfers beta-galactose to hydroxylysine residues of type I collagen. By acting on collagen glycosylation, facilitates the formation of collagen triple helix. Also involved in the biosynthesis of collagen type IV. In Mus musculus (Mouse), this protein is Procollagen galactosyltransferase 1 (Colgalt1).